The following is a 200-amino-acid chain: Large ribosomal subunit protein uL4 (200 aa).

Residues 43–71 are disordered; sequence RAQKTRAEVSGSGKKPWRQKGTGRARSGD.

The protein belongs to the universal ribosomal protein uL4 family. In terms of assembly, part of the 50S ribosomal subunit.

One of the primary rRNA binding proteins, this protein initially binds near the 5'-end of the 23S rRNA. It is important during the early stages of 50S assembly. It makes multiple contacts with different domains of the 23S rRNA in the assembled 50S subunit and ribosome. Its function is as follows. Forms part of the polypeptide exit tunnel. The polypeptide is Large ribosomal subunit protein uL4 (Actinobacillus pleuropneumoniae serotype 5b (strain L20)).